The following is a 102-amino-acid chain: Large ribosomal subunit protein uL24 (102 aa).

It belongs to the universal ribosomal protein uL24 family. Part of the 50S ribosomal subunit.

One of two assembly initiator proteins, it binds directly to the 5'-end of the 23S rRNA, where it nucleates assembly of the 50S subunit. Functionally, one of the proteins that surrounds the polypeptide exit tunnel on the outside of the subunit. This chain is Large ribosomal subunit protein uL24, found in Rhizobium rhizogenes (strain K84 / ATCC BAA-868) (Agrobacterium radiobacter).